The following is a 118-amino-acid chain: Large ribosomal subunit protein bL20 (118 aa).

Belongs to the bacterial ribosomal protein bL20 family.

In terms of biological role, binds directly to 23S ribosomal RNA and is necessary for the in vitro assembly process of the 50S ribosomal subunit. It is not involved in the protein synthesizing functions of that subunit. This Methylibium petroleiphilum (strain ATCC BAA-1232 / LMG 22953 / PM1) protein is Large ribosomal subunit protein bL20.